A 250-amino-acid chain; its full sequence is UPF0259 membrane protein SG1383 (250 aa).

Helical transmembrane passes span 20–40 (FASI…LGHA), 86–106 (AGTL…LTMI), 121–141 (IGLS…TTLL), 146–166 (LLLI…APVI), 191–211 (LLAP…LLAT), and 219–239 (LVAV…LLIY).

This sequence belongs to the UPF0259 family.

Its subcellular location is the cell inner membrane. In Sodalis glossinidius (strain morsitans), this protein is UPF0259 membrane protein SG1383.